Consider the following 130-residue polypeptide: Large ribosomal subunit protein bL19 (130 aa).

It belongs to the bacterial ribosomal protein bL19 family.

In terms of biological role, this protein is located at the 30S-50S ribosomal subunit interface and may play a role in the structure and function of the aminoacyl-tRNA binding site. The sequence is that of Large ribosomal subunit protein bL19 from Burkholderia lata (strain ATCC 17760 / DSM 23089 / LMG 22485 / NCIMB 9086 / R18194 / 383).